The sequence spans 527 residues: Oviduct-specific glycoprotein (527 aa).

The first 21 residues, 1–21 (MGKLLLWVGLVLVLKHHNGAA), serve as a signal peptide directing secretion. Positions 22–385 (HKLVCYFANW…YMLNDLLLKA (364 aa)) constitute a GH18 domain. The cysteines at positions 26 and 51 are disulfide-linked. Residue asparagine 62 is glycosylated (N-linked (GlcNAc...) asparagine). Chitin is bound by residues 71-72 (AR), 98-101 (GGWN), tyrosine 142, 211-214 (LSYD), and tryptophan 355. Residues asparagine 402 and asparagine 441 are each glycosylated (N-linked (GlcNAc...) asparagine). Positions 433–527 (TETHGRSDNM…MTLPSGKRSD (95 aa)) are disordered.

This sequence belongs to the glycosyl hydrolase 18 family. In terms of tissue distribution, oviduct.

Its subcellular location is the cytoplasmic vesicle. It localises to the secretory vesicle. Its function is as follows. Binds to oocyte zona pellucida in vivo. May play a role in the fertilization process and/or early embryonic development. The polypeptide is Oviduct-specific glycoprotein (OVGP1) (Sus scrofa (Pig)).